We begin with the raw amino-acid sequence, 380 residues long: DNA replication and repair protein RecF (380 aa).

Residue glycine 30–serine 37 participates in ATP binding.

The protein belongs to the RecF family.

The protein localises to the cytoplasm. In terms of biological role, the RecF protein is involved in DNA metabolism; it is required for DNA replication and normal SOS inducibility. RecF binds preferentially to single-stranded, linear DNA. It also seems to bind ATP. The chain is DNA replication and repair protein RecF from Rippkaea orientalis (strain PCC 8801 / RF-1) (Cyanothece sp. (strain PCC 8801)).